We begin with the raw amino-acid sequence, 327 residues long: Quinone oxidoreductase 1 (327 aa).

Residues 42-46, Tyr-130, 152-153, 173-177, Tyr-192, Ser-216, 238-241, 264-266, and Arg-317 each bind NADP(+); these read FIDTY, GV, GTAQK, FGNS, and PSL.

It belongs to the zinc-containing alcohol dehydrogenase family. Quinone oxidoreductase subfamily. As to quaternary structure, homodimer.

It catalyses the reaction 2 a quinone + NADPH + H(+) = 2 a 1,4-benzosemiquinone + NADP(+). This is Quinone oxidoreductase 1 (qorA) from Escherichia coli (strain K12).